A 233-amino-acid polypeptide reads, in one-letter code: Aspartate/glutamate leucyltransferase (233 aa).

It belongs to the R-transferase family. Bpt subfamily.

It is found in the cytoplasm. It carries out the reaction N-terminal L-glutamyl-[protein] + L-leucyl-tRNA(Leu) = N-terminal L-leucyl-L-glutamyl-[protein] + tRNA(Leu) + H(+). The catalysed reaction is N-terminal L-aspartyl-[protein] + L-leucyl-tRNA(Leu) = N-terminal L-leucyl-L-aspartyl-[protein] + tRNA(Leu) + H(+). Functions in the N-end rule pathway of protein degradation where it conjugates Leu from its aminoacyl-tRNA to the N-termini of proteins containing an N-terminal aspartate or glutamate. The polypeptide is Aspartate/glutamate leucyltransferase (Vibrio cholerae serotype O1 (strain ATCC 39315 / El Tor Inaba N16961)).